The chain runs to 417 residues: NADH-quinone oxidoreductase subunit D (417 aa).

Belongs to the complex I 49 kDa subunit family. In terms of assembly, NDH-1 is composed of 14 different subunits. Subunits NuoB, C, D, E, F, and G constitute the peripheral sector of the complex.

It is found in the cell inner membrane. It catalyses the reaction a quinone + NADH + 5 H(+)(in) = a quinol + NAD(+) + 4 H(+)(out). Its function is as follows. NDH-1 shuttles electrons from NADH, via FMN and iron-sulfur (Fe-S) centers, to quinones in the respiratory chain. The immediate electron acceptor for the enzyme in this species is believed to be ubiquinone. Couples the redox reaction to proton translocation (for every two electrons transferred, four hydrogen ions are translocated across the cytoplasmic membrane), and thus conserves the redox energy in a proton gradient. The protein is NADH-quinone oxidoreductase subunit D of Verminephrobacter eiseniae (strain EF01-2).